The chain runs to 76 residues: Acyl carrier protein (76 aa).

Residues 1-76 (MATFDDVKDV…AAVDYIDNNQ (76 aa)) enclose the Carrier domain. An O-(pantetheine 4'-phosphoryl)serine modification is found at serine 36.

The protein belongs to the acyl carrier protein (ACP) family. Post-translationally, 4'-phosphopantetheine is transferred from CoA to a specific serine of apo-ACP by AcpS. This modification is essential for activity because fatty acids are bound in thioester linkage to the sulfhydryl of the prosthetic group.

It localises to the cytoplasm. It participates in lipid metabolism; fatty acid biosynthesis. Functionally, carrier of the growing fatty acid chain in fatty acid biosynthesis. The polypeptide is Acyl carrier protein (Deinococcus radiodurans (strain ATCC 13939 / DSM 20539 / JCM 16871 / CCUG 27074 / LMG 4051 / NBRC 15346 / NCIMB 9279 / VKM B-1422 / R1)).